We begin with the raw amino-acid sequence, 118 residues long: Beta-2-microglobulin (118 aa).

An N-terminal signal peptide occupies residues 1-20 (MARFVVLVLLGLLYLSHLDA). An Ig-like C1-type domain is found at 25-113 (PKVQVYSRHP…TTLSEPKVVK (89 aa)). The cysteines at positions 45 and 99 are disulfide-linked.

Belongs to the beta-2-microglobulin family. Heterodimer of an alpha chain and a beta chain. Beta-2-microglobulin is the beta-chain of major histocompatibility complex class I molecules.

It localises to the secreted. Functionally, component of the class I major histocompatibility complex (MHC). Involved in the presentation of peptide antigens to the immune system. The chain is Beta-2-microglobulin (B2M) from Felis catus (Cat).